A 172-amino-acid polypeptide reads, in one-letter code: Translation initiation factor IF-3 (172 aa).

This sequence belongs to the IF-3 family. Monomer.

It is found in the cytoplasm. Its function is as follows. IF-3 binds to the 30S ribosomal subunit and shifts the equilibrium between 70S ribosomes and their 50S and 30S subunits in favor of the free subunits, thus enhancing the availability of 30S subunits on which protein synthesis initiation begins. The protein is Translation initiation factor IF-3 of Sulfurimonas denitrificans (strain ATCC 33889 / DSM 1251) (Thiomicrospira denitrificans (strain ATCC 33889 / DSM 1251)).